The primary structure comprises 466 residues: Glycine--tRNA ligase (466 aa).

R104 and E178 together coordinate substrate. Residues 210–212 (RNE), 220–225 (FRTREF), 294–295 (EL), and 338–341 (GADR) each bind ATP. 225–229 (FEQME) contacts substrate. 334-338 (EPSLG) is a substrate binding site.

It belongs to the class-II aminoacyl-tRNA synthetase family. As to quaternary structure, homodimer.

It localises to the cytoplasm. The catalysed reaction is tRNA(Gly) + glycine + ATP = glycyl-tRNA(Gly) + AMP + diphosphate. Its function is as follows. Catalyzes the attachment of glycine to tRNA(Gly). The polypeptide is Glycine--tRNA ligase (Geobacillus thermodenitrificans (strain NG80-2)).